The following is a 410-amino-acid chain: Dihydrolipoyllysine-residue succinyltransferase component of 2-oxoglutarate dehydrogenase complex (410 aa).

A Lipoyl-binding domain is found at Ile-3–Gly-81. Lys-44 bears the N6-lipoyllysine mark. The Peripheral subunit-binding (PSBD) domain maps to Thr-112 to Leu-150. Residues His-381 and Asp-385 contribute to the active site.

Belongs to the 2-oxoacid dehydrogenase family. As to quaternary structure, forms a 24-polypeptide structural core with octahedral symmetry. Part of the 2-oxoglutarate dehydrogenase (OGDH) complex composed of E1 (2-oxoglutarate dehydrogenase), E2 (dihydrolipoamide succinyltransferase) and E3 (dihydrolipoamide dehydrogenase); the complex contains multiple copies of the three enzymatic components (E1, E2 and E3). It depends on (R)-lipoate as a cofactor.

It carries out the reaction N(6)-[(R)-dihydrolipoyl]-L-lysyl-[protein] + succinyl-CoA = N(6)-[(R)-S(8)-succinyldihydrolipoyl]-L-lysyl-[protein] + CoA. It functions in the pathway amino-acid degradation; L-lysine degradation via saccharopine pathway; glutaryl-CoA from L-lysine: step 6/6. In terms of biological role, E2 component of the 2-oxoglutarate dehydrogenase (OGDH) complex which catalyzes the second step in the conversion of 2-oxoglutarate to succinyl-CoA and CO(2). In Buchnera aphidicola subsp. Baizongia pistaciae (strain Bp), this protein is Dihydrolipoyllysine-residue succinyltransferase component of 2-oxoglutarate dehydrogenase complex (sucB).